The following is a 523-amino-acid chain: 2-isopropylmalate synthase (523 aa).

In terms of domain architecture, Pyruvate carboxyltransferase spans 5–267 (VIIFDTTLRD…ETGINAKEIH (263 aa)). 4 residues coordinate Mn(2+): D14, H202, H204, and N238. A regulatory domain region spans residues 392–523 (KLQQLVVHSD…QQNKRELGGV (132 aa)).

This sequence belongs to the alpha-IPM synthase/homocitrate synthase family. LeuA type 1 subfamily. As to quaternary structure, homodimer. Requires Mn(2+) as cofactor.

The protein resides in the cytoplasm. The catalysed reaction is 3-methyl-2-oxobutanoate + acetyl-CoA + H2O = (2S)-2-isopropylmalate + CoA + H(+). Its pathway is amino-acid biosynthesis; L-leucine biosynthesis; L-leucine from 3-methyl-2-oxobutanoate: step 1/4. Catalyzes the condensation of the acetyl group of acetyl-CoA with 3-methyl-2-oxobutanoate (2-ketoisovalerate) to form 3-carboxy-3-hydroxy-4-methylpentanoate (2-isopropylmalate). This chain is 2-isopropylmalate synthase, found in Shewanella pealeana (strain ATCC 700345 / ANG-SQ1).